The sequence spans 585 residues: Proline--tRNA ligase (585 aa).

Belongs to the class-II aminoacyl-tRNA synthetase family. ProS type 1 subfamily. Homodimer.

The protein resides in the cytoplasm. The enzyme catalyses tRNA(Pro) + L-proline + ATP = L-prolyl-tRNA(Pro) + AMP + diphosphate. In terms of biological role, catalyzes the attachment of proline to tRNA(Pro) in a two-step reaction: proline is first activated by ATP to form Pro-AMP and then transferred to the acceptor end of tRNA(Pro). As ProRS can inadvertently accommodate and process non-cognate amino acids such as alanine and cysteine, to avoid such errors it has two additional distinct editing activities against alanine. One activity is designated as 'pretransfer' editing and involves the tRNA(Pro)-independent hydrolysis of activated Ala-AMP. The other activity is designated 'posttransfer' editing and involves deacylation of mischarged Ala-tRNA(Pro). The misacylated Cys-tRNA(Pro) is not edited by ProRS. The protein is Proline--tRNA ligase of Acidobacterium capsulatum (strain ATCC 51196 / DSM 11244 / BCRC 80197 / JCM 7670 / NBRC 15755 / NCIMB 13165 / 161).